The sequence spans 308 residues: Glutamyl-Q tRNA(Asp) synthetase (308 aa).

L-glutamate is bound by residues 19 to 23 (RFAPS) and Glu-55. The 'HIGH' region motif lies at 22–32 (PSPSGELHFGS). Zn(2+) is bound by residues Cys-111, Cys-113, Tyr-125, and Cys-129. Residues Tyr-182 and Arg-200 each coordinate L-glutamate. Positions 238–242 (KLSKQ) match the 'KMSKS' region motif. Residue Lys-241 coordinates ATP.

Belongs to the class-I aminoacyl-tRNA synthetase family. GluQ subfamily. Requires Zn(2+) as cofactor.

Catalyzes the tRNA-independent activation of glutamate in presence of ATP and the subsequent transfer of glutamate onto a tRNA(Asp). Glutamate is transferred on the 2-amino-5-(4,5-dihydroxy-2-cyclopenten-1-yl) moiety of the queuosine in the wobble position of the QUC anticodon. This is Glutamyl-Q tRNA(Asp) synthetase from Escherichia coli (strain K12 / MC4100 / BW2952).